The following is a 404-amino-acid chain: 4-hydroxy-3-methylbut-2-en-1-yl diphosphate synthase (flavodoxin) (404 aa).

[4Fe-4S] cluster is bound by residues Cys310, Cys313, Cys345, and Glu352.

This sequence belongs to the IspG family. It depends on [4Fe-4S] cluster as a cofactor.

It catalyses the reaction (2E)-4-hydroxy-3-methylbut-2-enyl diphosphate + oxidized [flavodoxin] + H2O + 2 H(+) = 2-C-methyl-D-erythritol 2,4-cyclic diphosphate + reduced [flavodoxin]. It functions in the pathway isoprenoid biosynthesis; isopentenyl diphosphate biosynthesis via DXP pathway; isopentenyl diphosphate from 1-deoxy-D-xylulose 5-phosphate: step 5/6. In terms of biological role, converts 2C-methyl-D-erythritol 2,4-cyclodiphosphate (ME-2,4cPP) into 1-hydroxy-2-methyl-2-(E)-butenyl 4-diphosphate. The polypeptide is 4-hydroxy-3-methylbut-2-en-1-yl diphosphate synthase (flavodoxin) (Treponema pallidum (strain Nichols)).